Consider the following 600-residue polypeptide: ATP-dependent lipid A-core flippase (600 aa).

The next 4 membrane-spanning stretches (helical) occupy residues 27 to 47 (ISLF…QPML), 83 to 103 (LLII…NYFL), 174 to 194 (LLFM…LIAV), and 267 to 287 (PLLQ…VLYL). In terms of domain architecture, ABC transmembrane type-1 spans 31 to 322 (LISIVGFLIF…LSEVSSTIQK (292 aa)). The ABC transporter domain maps to 354 to 590 (LDVRNLSFTY…NGYYARLNAM (237 aa)). 388–395 (GRSGSGKS) is a binding site for ATP.

Belongs to the ABC transporter superfamily. Lipid exporter (TC 3.A.1.106) family. Homodimer.

It localises to the cell inner membrane. It catalyses the reaction ATP + H2O + lipid A-core oligosaccharideSide 1 = ADP + phosphate + lipid A-core oligosaccharideSide 2.. Its function is as follows. Involved in lipopolysaccharide (LPS) biosynthesis. Translocates lipid A-core from the inner to the outer leaflet of the inner membrane. Transmembrane domains (TMD) form a pore in the inner membrane and the ATP-binding domain (NBD) is responsible for energy generation. In Pseudomonas fluorescens (strain Pf0-1), this protein is ATP-dependent lipid A-core flippase.